The following is an 885-amino-acid chain: Chromatin assembly factor 1 subunit A-B (885 aa).

Disordered regions lie at residues 1-24 (MPGK…KMVQ), 115-157 (EDSN…NEEC), 176-361 (LDKP…EEEK), and 536-605 (VDSD…QKLK). The segment covering 12-21 (KSSTKSNTKK) has biased composition (low complexity). 3 stretches are compositionally biased toward polar residues: residues 116–128 (DSNI…SPLN), 134–157 (QLAN…NEEC), and 182–193 (SAASCTSVSNFS). Composition is skewed to low complexity over residues 211 to 227 (VSVS…SPDV) and 237 to 254 (SSPS…SNKT). A coiled-coil region spans residues 251-376 (SNKTSAEKKK…KAEITRFLQK (126 aa)). The segment covering 255 to 361 (SAEKKKTKDK…EEKRLKEEEK (107 aa)) has biased composition (basic and acidic residues). Acidic residues-rich tracts occupy residues 536–548 (VDSD…EEPG) and 557–573 (ENED…DDDG). Residues 629-665 (CVWCDSKASEIRLLQKFSACILESPAVEEELTQDISS) form a necessary for homodimerization, competence for chromatin assembly region.

This sequence belongs to the CHAF1A family. In terms of assembly, homodimer.

It is found in the nucleus. In terms of biological role, involved in chromatin assembly in DNA replication and DNA repair. In Xenopus laevis (African clawed frog), this protein is Chromatin assembly factor 1 subunit A-B (chaf1a-b).